The chain runs to 390 residues: Large ribosomal subunit protein mL44 (390 aa).

The N-terminal 59 residues, 1–59 (MGIVLKRAIAAGMKPFPNSTWHWSRTIRPFSQHLSSTCFLQQSSRFTSKRYLHLSTLTQ), are a transit peptide targeting the mitochondrion. One can recognise an RNase III domain in the interval 139–205 (AFVNTVPTNK…LAHIAKYWGI (67 aa)). Residues 302–372 (QPTRELAMLC…ATDALMKWYC (71 aa)) form the DRBM domain.

Belongs to the ribonuclease III family. Mitochondrion-specific ribosomal protein mL44 subfamily. In terms of assembly, component of the mitochondrial large ribosomal subunit (mt-LSU). Mature yeast 74S mitochondrial ribosomes consist of a small (37S) and a large (54S) subunit. The 37S small subunit contains a 15S ribosomal RNA (15S mt-rRNA) and 34 different proteins. The 54S large subunit contains a 21S rRNA (21S mt-rRNA) and 46 different proteins. mL44 forms a heterodimer with mL57 and stabilizes rRNA expansion segments 1/2 at a membrane-facing protuberance close to the point of attachment of the ribosome to the translocon in the membrane.

It is found in the mitochondrion. Its function is as follows. Component of the mitochondrial ribosome (mitoribosome), a dedicated translation machinery responsible for the synthesis of mitochondrial genome-encoded proteins, including at least some of the essential transmembrane subunits of the mitochondrial respiratory chain. The mitoribosomes are attached to the mitochondrial inner membrane and translation products are cotranslationally integrated into the membrane. The polypeptide is Large ribosomal subunit protein mL44 (MRPL3) (Saccharomyces cerevisiae (strain ATCC 204508 / S288c) (Baker's yeast)).